The primary structure comprises 732 residues: Small conductance calcium-activated potassium channel protein 3 (732 aa).

The span at Met1 to Gly11 shows a compositional bias: basic and acidic residues. Disordered regions lie at residues Met1–Pro82 and Ala119–Pro161. Residues Gln35–Pro61 show a composition bias toward pro residues. Low complexity predominate over residues Gln62 to Pro82. A compositionally biased stretch (polar residues) spans Ala119–Leu133. Low complexity predominate over residues Gly139–Ser148. Ser168 is modified (phosphoserine). The segment covering Thr241–Pro257 has biased composition (polar residues). A disordered region spans residues Thr241–Asn260. The chain crosses the membrane as a helical span at residues Leu289–Leu309. Residues Phe316–Ile336 form a helical membrane-spanning segment. The chain crosses the membrane as a helical span at residues Ile367 to Trp387. The chain crosses the membrane as a helical span at residues Ile406–His426. A helical membrane pass occupies residues Leu455–Ala475. The pore-forming intramembrane region spans Phe495–Val515. The chain crosses the membrane as a helical span at residues Val524–Ala544. Positions Asp562–Val638 are calmodulin-binding. A coiled-coil region spans residues Ile643–Ser670. Positions Gly704–Cys732 are disordered. Low complexity predominate over residues Ser718–Cys732.

Belongs to the potassium channel KCNN family. KCa2.3/KCNN3 subfamily. As to quaternary structure, homodimer. Heteromultimer with KCNN2 or KCNN1; this modulates plasma membrane expression and consequently the small conductance calcium-activated potassium channel activity. The complex is composed of 4 channel subunits each of which binds to a calmodulin subunit which regulates the channel activity through calcium-binding. Interacts with CALM1. In terms of tissue distribution, expressed at low levels in atrial and ventricular myocytes (at protein level).

Its subcellular location is the cell membrane. The protein resides in the cytoplasm. It is found in the myofibril. It localises to the sarcomere. The protein localises to the z line. The catalysed reaction is K(+)(in) = K(+)(out). Its activity is regulated as follows. Inhibited by bee venom neurotoxin apamin. Small conductance calcium-activated potassium channel that mediates the voltage-independent transmembrane transfer of potassium across the cell membrane through a constitutive interaction with calmodulin which binds the intracellular calcium allowing its opening. The current is characterized by a voltage-independent activation, an intracellular calcium concentration increase-dependent activation and a single-channel conductance of 10 picosiemens. Also presents an inwardly rectifying current, thus reducing its already small outward conductance of potassium ions, which is particularly the case when the membrane potential displays positive values, above + 20 mV. Activation is followed by membrane hyperpolarization. Thought to regulate neuronal excitability by contributing to the slow component of synaptic afterhyperpolarization. This is Small conductance calcium-activated potassium channel protein 3 from Mus musculus (Mouse).